The sequence spans 371 residues: Glutamate 5-kinase (371 aa).

Lys11 lines the ATP pocket. Substrate contacts are provided by Ser52, Asp139, and Asn151. ATP contacts are provided by residues 171-172 (TD) and 213-219 (TGGMATK). The PUA domain occupies 278 to 356 (EGSLTLDEGA…AEIPRILGYE (79 aa)).

The protein belongs to the glutamate 5-kinase family.

The protein localises to the cytoplasm. It catalyses the reaction L-glutamate + ATP = L-glutamyl 5-phosphate + ADP. It participates in amino-acid biosynthesis; L-proline biosynthesis; L-glutamate 5-semialdehyde from L-glutamate: step 1/2. In terms of biological role, catalyzes the transfer of a phosphate group to glutamate to form L-glutamate 5-phosphate. The polypeptide is Glutamate 5-kinase (Synechococcus sp. (strain JA-2-3B'a(2-13)) (Cyanobacteria bacterium Yellowstone B-Prime)).